Reading from the N-terminus, the 785-residue chain is MDKKALKRLEYHKVLEQLAACSGSSLGREKIMAMEPLDNLQAILRKQEETSEGRKLLRLEPFAEAGGWKDIRAQLRKAGQGAILDPEELLAVADTLTAGRTIRKFFQDRQEQYPLLYEVSSALVSLPELERKIKNAILPGGEVADGASPELAQIRRRLAAAQAQVKEHLEHIIRSPSYQKYLQEPIVTIREGRYVVPVKIEHRSQVPGIVHDQSASGATLFIEPMAVVEKNNELRRLMAAEKREIQRILAELSAGVAQHAGPIGASLEALGELDFIMARARYSQKLDAWAPLLEGEACMDIRRGRHPLLQGEVVPIDIRLGADFDTLVITGPNTGGKTVALKTAGLLVLMAQSGLHIPAGEGSRLGIFRQVFADIGDEQSIEQSLSTFSSHMNNIVEIIGKAGPDSLVLLDELGAGTDPAEGAALAQSILEKLHSAGAKTVATTHYGELKDFALTRERVENASVEFDAITLRPTYRLLIGKPGRSNAFEIAARLGLPEEVVKRARSFLTAEHIQAEELMRSLEKTQQEAEAERRRAAELASEARALKERYEKIEADLASKRESILSKAAEEAQALVRAARLEAEAAVRELREKMAEEAARERENAIREAREKLRKLQQRVGRAVPEKTVPGEAPAGLRPGEEVFLTRYNQKGYVLEPPGAGGEVLVQVGVIKMNVPLRELRRVKEARPAGGQSEVAGVLLNKAREISPELDLRGLYADEALLEVEKYLDDAYLAGLSRVYLIHGKGTGSLRAAIHRQLSGHRRVKSFRLGEHGEGGLGVTVVELA.

G331–T338 provides a ligand contact to ATP. The Smr domain maps to L710 to A785.

This sequence belongs to the DNA mismatch repair MutS family. MutS2 subfamily. In terms of assembly, homodimer. Binds to stalled ribosomes, contacting rRNA.

Endonuclease that is involved in the suppression of homologous recombination and thus may have a key role in the control of bacterial genetic diversity. Its function is as follows. Acts as a ribosome collision sensor, splitting the ribosome into its 2 subunits. Detects stalled/collided 70S ribosomes which it binds and splits by an ATP-hydrolysis driven conformational change. Acts upstream of the ribosome quality control system (RQC), a ribosome-associated complex that mediates the extraction of incompletely synthesized nascent chains from stalled ribosomes and their subsequent degradation. Probably generates substrates for RQC. The chain is Endonuclease MutS2 from Pelotomaculum thermopropionicum (strain DSM 13744 / JCM 10971 / SI).